We begin with the raw amino-acid sequence, 48 residues long: Probable antitoxin PhoAT (48 aa).

Belongs to the PhoAT antitoxin family. In terms of assembly, interacts with toxin PhoH2.

Functionally, probable antitoxin component of a type II toxin-antitoxin (TA) system. The probable cognate antitoxin is PhoAT; the toxin gene can be expressed in the absence of the antitoxin gene in M.smegmatis strain mc(2)155. The polypeptide is Probable antitoxin PhoAT (Mycolicibacterium smegmatis (strain ATCC 700084 / mc(2)155) (Mycobacterium smegmatis)).